The following is a 777-amino-acid chain: Zinc finger FYVE domain-containing protein 1 (777 aa).

Residues 416-777 (MAHSSFFPDE…FNCNKKPGDL (362 aa)) form a required for localization in the lipid droplets region. 2 consecutive FYVE-type zinc fingers follow at residues 598-659 (NSQI…EARN) and 715-775 (DHEI…KKPG). Zn(2+) is bound by residues cysteine 604, cysteine 607, cysteine 620, cysteine 623, cysteine 628, cysteine 631, cysteine 651, cysteine 654, cysteine 721, cysteine 724, cysteine 737, cysteine 740, cysteine 745, cysteine 748, cysteine 767, and cysteine 770.

Interacts with RAB18 (in GTP-bound form). Interacts with BSCL2 in a RAB18-dependent manner. Interacts with ZW10. As to quaternary structure, (Microbial infection) Interacts with SARS coronavirus-2/SARS-CoV-2 non-structural protein 6 (nsp6); the interaction is independent of PtdIns3P-binding and leads to endoplasmic reticulum (ER) and double membrane vesicles (DMVs) binding to lipid droplets. Highly expressed in heart. Also detected in the testis. As to expression, expressed in all tissues examined, including, brain, placenta, lung, liver, skeletal muscle, pancreas and kidney. Highly expressed in heart.

Its subcellular location is the golgi apparatus. The protein resides in the golgi stack. The protein localises to the endoplasmic reticulum. It localises to the lipid droplet. It is found in the preautophagosomal structure. Its subcellular location is the mitochondrion. Its function is as follows. Plays a role in the formation of lipid droplets (LDs) which are storage organelles at the center of lipid and energy homeostasis. Regulates the morphology, size and distribution of LDs. Mediates the formation of endoplasmic reticulum-lipid droplets (ER-LD) contacts by forming a complex with RAB18 and ZW10. Binds to phosphatidylinositol 3-phosphate (PtdIns3P) through FYVE-type zinc finger. (Microbial infection) Upon SARS coronavirus-2/SARS-CoV-2 infection, mediates through binding with non-structural protein 6 (nsp6) the replication organelle-lipid droplet association required to sustain viral replication. This chain is Zinc finger FYVE domain-containing protein 1 (ZFYVE1), found in Homo sapiens (Human).